The following is a 1638-amino-acid chain: Ciliary rootlet coiled-coil protein 2 (1638 aa).

Polar residues predominate over residues 1–20 (MSSTSSNPDDGDTTEQSQLG). Disordered stretches follow at residues 1 to 21 (MSST…QLGL), 39 to 92 (REDR…REES), 396 to 423 (ARLR…TSLH), and 1168 to 1213 (TRRK…NLQE). The span at 67–82 (SSSLGEEPLSGLREPP) shows a compositional bias: low complexity. Residues 85-144 (TSHAREESELLQEELTRLEDLLAQADAEREELASRCHMVSQRLQARLDTTEARLRKSELE) adopt a coiled-coil conformation. Polar residues predominate over residues 406-421 (SPHQRMSPARTSSPTS). 2 coiled-coil regions span residues 426–1234 (LQAV…VQKE) and 1281–1315 (LQEA…AEGA). Over residues 1180–1193 (RTLEAENQRKRQEV) the composition is skewed to basic and acidic residues. Disordered stretches follow at residues 1338-1383 (RNLL…VPVD) and 1506-1551 (ALEE…QTTS). Residues 1349–1371 (SPTTGSSQTRPGRQRTSPPTRSY) show a composition bias toward polar residues. Coiled coils occupy residues 1412–1506 (RDNS…LRQA) and 1542–1576 (RRAL…TEQE).

This sequence belongs to the rootletin family.

The polypeptide is Ciliary rootlet coiled-coil protein 2 (Mus musculus (Mouse)).